The sequence spans 1241 residues: Interphotoreceptor matrix proteoglycan 2 (1241 aa).

An N-terminal signal peptide occupies residues 1-22; sequence MIMFPLFGKISLGILIFVLIEG. Residues 23–1099 lie on the Extracellular side of the membrane; that stretch reads DFPSLTAQTY…KHCEEFVSEP (1077 aa). Asn154 carries an N-linked (GlcNAc...) asparagine glycan. The segment at 180–223 is disordered; sequence ELSSPVPVGDTSTLGDTTLSVPHPEVDAYEGASESSLERPEESI. Positions 189-199 are enriched in polar residues; the sequence is DTSTLGDTTLS. 2 O-linked (GalNAc...) threonine glycosylation sites follow: Thr190 and Thr192. The region spanning 239–353 is the SEA 1 domain; it reads GEQIAEFSIH…KPTVVYTISN (115 aa). The segment at 259–267 is hyaluronan-binding motif involved in chondroitin sulfate A-binding; that stretch reads QDSSSFHHQ. 3 N-linked (GlcNAc...) asparagine glycosylation sites follow: Asn301, Asn320, and Asn370. 2 O-linked (GalNAc...) threonine glycosylation sites follow: Thr544 and Thr556. Residues 660–678 show a composition bias toward basic and acidic residues; it reads QISKHSKYEHDDRSTHFPE. Residues 660–684 form a disordered region; that stretch reads QISKHSKYEHDDRSTHFPEEEPLSG. The 114-residue stretch at 897 to 1010 folds into the SEA 2 domain; the sequence is GALVVFFSLR…YSLDVESGDE (114 aa). N-linked (GlcNAc...) asparagine glycans are attached at residues Asn942 and Asn956. EGF-like domains follow at residues 1010–1051 and 1052–1093; these read EANP…RPCQ and SLCD…KHCE. Disulfide bonds link Cys1014/Cys1025, Cys1019/Cys1036, Cys1038/Cys1050, Cys1054/Cys1067, Cys1061/Cys1077, and Cys1079/Cys1092. The segment at 1080–1088 is hyaluronan-binding motif involved in chondroitin sulfate C-binding; the sequence is RVGENWWYR. Residues 1100–1120 traverse the membrane as a helical segment; the sequence is VIIGITIASVVGLLVIFSAII. Topologically, residues 1121–1241 are cytoplasmic; that stretch reads YFFIRTLQAH…FVREQQVEEV (121 aa). A hyaluronan-binding motif involved in chondroitin sulfate A- and C-binding region spans residues 1125 to 1133; sequence RTLQAHHDR. Residues 1136-1145 form a hyaluronan-binding motif involved in chondroitin sulfate C-binding region; the sequence is RESPFSGSSR. Residues 1210-1218 form a hyaluronan-binding motif involved in chondroitin sulfate A- and C-binding motif region; it reads REEIQERMR.

Post-translationally, highly glycosylated (N- and O-linked carbohydrates). In terms of tissue distribution, expressed in the retina (at protein level). Expressed by photoreceptors of the interphotoreceptor matrix (IPM) surrounding both rods and cones (at protein level). IPM occupies the subretinal space between the apices of the retinal pigment epithelium and the neural retina. Expressed in the pineal gland (at protein level).

The protein resides in the photoreceptor outer segment membrane. Its subcellular location is the photoreceptor inner segment membrane. The protein localises to the secreted. It localises to the extracellular space. It is found in the extracellular matrix. The protein resides in the interphotoreceptor matrix. In terms of biological role, chondroitin sulfate- and hyaluronan-binding proteoglycan involved in the organization of interphotoreceptor matrix; may participate in the maturation and maintenance of the light-sensitive photoreceptor outer segment. Binds heparin. In Homo sapiens (Human), this protein is Interphotoreceptor matrix proteoglycan 2 (IMPG2).